An 896-amino-acid chain; its full sequence is Protein translocase subunit SecA (896 aa).

ATP contacts are provided by residues Gln-87, 105–109 (GEGKT), and Asp-507. Positions 855-879 (LSENDEASETQTFRRQEKKIGRNDP) are disordered. Over residues 866–876 (TFRRQEKKIGR) the composition is skewed to basic and acidic residues. Residues Cys-880, Cys-882, Cys-891, and His-892 each coordinate Zn(2+).

Belongs to the SecA family. Monomer and homodimer. Part of the essential Sec protein translocation apparatus which comprises SecA, SecYEG and auxiliary proteins SecDF-YajC and YidC. It depends on Zn(2+) as a cofactor.

It is found in the cell inner membrane. It localises to the cytoplasm. It carries out the reaction ATP + H2O + cellular proteinSide 1 = ADP + phosphate + cellular proteinSide 2.. Part of the Sec protein translocase complex. Interacts with the SecYEG preprotein conducting channel. Has a central role in coupling the hydrolysis of ATP to the transfer of proteins into and across the cell membrane, serving both as a receptor for the preprotein-SecB complex and as an ATP-driven molecular motor driving the stepwise translocation of polypeptide chains across the membrane. This chain is Protein translocase subunit SecA, found in Legionella pneumophila (strain Lens).